A 230-amino-acid polypeptide reads, in one-letter code: Ribulose-phosphate 3-epimerase (230 aa).

Position 10 (serine 10) interacts with substrate. A divalent metal cation contacts are provided by histidine 35, aspartate 37, and histidine 68. The active-site Proton acceptor is aspartate 37. Residues histidine 68, 146–149 (GFGG), 179–181 (DGG), and 201–202 (GS) each bind substrate. Aspartate 179 is a binding site for a divalent metal cation. Aspartate 179 acts as the Proton donor in catalysis.

It belongs to the ribulose-phosphate 3-epimerase family. As to quaternary structure, homohexamer. It depends on a divalent metal cation as a cofactor.

It catalyses the reaction D-ribulose 5-phosphate = D-xylulose 5-phosphate. It participates in carbohydrate degradation. Its function is as follows. Catalyzes the reversible epimerization of D-ribulose 5-phosphate to D-xylulose 5-phosphate. In Synechocystis sp. (strain ATCC 27184 / PCC 6803 / Kazusa), this protein is Ribulose-phosphate 3-epimerase.